Consider the following 267-residue polypeptide: Acyl-[acyl-carrier-protein]--UDP-N-acetylglucosamine O-acyltransferase (267 aa).

It belongs to the transferase hexapeptide repeat family. LpxA subfamily. Homotrimer.

The protein resides in the cytoplasm. It catalyses the reaction a (3R)-hydroxyacyl-[ACP] + UDP-N-acetyl-alpha-D-glucosamine = a UDP-3-O-[(3R)-3-hydroxyacyl]-N-acetyl-alpha-D-glucosamine + holo-[ACP]. Its pathway is glycolipid biosynthesis; lipid IV(A) biosynthesis; lipid IV(A) from (3R)-3-hydroxytetradecanoyl-[acyl-carrier-protein] and UDP-N-acetyl-alpha-D-glucosamine: step 1/6. Its function is as follows. Involved in the biosynthesis of lipid A, a phosphorylated glycolipid that anchors the lipopolysaccharide to the outer membrane of the cell. This is Acyl-[acyl-carrier-protein]--UDP-N-acetylglucosamine O-acyltransferase from Proteus mirabilis (strain HI4320).